Reading from the N-terminus, the 134-residue chain is Small ribosomal subunit protein uS8c (134 aa).

Belongs to the universal ribosomal protein uS8 family. In terms of assembly, part of the 30S ribosomal subunit.

Its subcellular location is the plastid. It is found in the chloroplast. In terms of biological role, one of the primary rRNA binding proteins, it binds directly to 16S rRNA central domain where it helps coordinate assembly of the platform of the 30S subunit. The chain is Small ribosomal subunit protein uS8c (rps8) from Draba nemorosa (Woodland whitlowgrass).